A 254-amino-acid polypeptide reads, in one-letter code: Keratin-associated protein 24-1 (254 aa).

Tandem repeats lie at residues 193 to 202 (YISNSCQPQS), 203 to 212 (YLVRNYHYSS), 213 to 222 (YRPTSCRPLS), 223 to 232 (YLSRSFRSLS), 233 to 242 (YIPSTFPPLR), and 243 to 252 (YLCSGSRPLK). The 6 X 10 AA repeats of Y-[ILR]-[SVPC]-[NRTS]-[SNTG]-X-[QHRP]-[PSY]-[QSL]-[SRK] stretch occupies residues 193 to 252 (YISNSCQPQSYLVRNYHYSSYRPTSCRPLSYLSRSFRSLSYIPSTFPPLRYLCSGSRPLK).

This sequence belongs to the PMG family. In terms of assembly, interacts with hair keratins. Specific expression in the middle/upper hair cuticle.

Functionally, in the hair cortex, hair keratin intermediate filaments are embedded in an interfilamentous matrix, consisting of hair keratin-associated proteins (KRTAP), which are essential for the formation of a rigid and resistant hair shaft through their extensive disulfide bond cross-linking with abundant cysteine residues of hair keratins. The matrix proteins include the high-sulfur and high-glycine-tyrosine keratins. This Homo sapiens (Human) protein is Keratin-associated protein 24-1 (KRTAP24-1).